The chain runs to 794 residues: Protein argonaute-4 (794 aa).

The PAZ domain occupies Pro-152 to Ala-271. A Piwi domain is found at Leu-442 to Val-753. The tract at residues Asp-758–Lys-779 is disordered.

The protein belongs to the argonaute family. Ago subfamily.

It is found in the cytoplasm. It localises to the P-body. Functionally, required for RNA-mediated gene silencing (RNAi). Binds to short RNAs such as microRNAs (miRNAs) and represses the translation of mRNAs which are complementary to them. Lacks endonuclease activity and does not appear to cleave target mRNAs. This is Protein argonaute-4 (AGO4) from Gallus gallus (Chicken).